Consider the following 490-residue polypeptide: Cobyric acid synthase (490 aa).

Residues 252–428 (ARRVAVVRLP…WHGAFEGDAL (177 aa)) enclose the GATase cobBQ-type domain. Catalysis depends on Cys-333, which acts as the Nucleophile. Residue His-420 is part of the active site.

The protein belongs to the CobB/CobQ family. CobQ subfamily.

The protein operates within cofactor biosynthesis; adenosylcobalamin biosynthesis. Catalyzes amidations at positions B, D, E, and G on adenosylcobyrinic A,C-diamide. NH(2) groups are provided by glutamine, and one molecule of ATP is hydrogenolyzed for each amidation. This Mycolicibacterium vanbaalenii (strain DSM 7251 / JCM 13017 / BCRC 16820 / KCTC 9966 / NRRL B-24157 / PYR-1) (Mycobacterium vanbaalenii) protein is Cobyric acid synthase.